A 901-amino-acid polypeptide reads, in one-letter code: HTH-type transcriptional regulator MalT (901 aa).

39-46 is an ATP binding site; it reads SPAGYGKT. The 66-residue stretch at 829-894 folds into the HTH luxR-type domain; sequence ELIRTSPLTQ…DAVQHAQQLL (66 aa). The H-T-H motif DNA-binding region spans 853 to 872; that stretch reads NDQIAGELDVAATTIKTHIR.

The protein belongs to the MalT family. In terms of assembly, monomer in solution. Oligomerizes to an active state in the presence of the positive effectors ATP and maltotriose.

Its activity is regulated as follows. Activated by ATP and maltotriose, which are both required for DNA binding. Positively regulates the transcription of the maltose regulon whose gene products are responsible for uptake and catabolism of malto-oligosaccharides. Specifically binds to the promoter region of its target genes, recognizing a short DNA motif called the MalT box. The protein is HTH-type transcriptional regulator MalT of Cronobacter sakazakii (strain ATCC BAA-894) (Enterobacter sakazakii).